The following is a 160-amino-acid chain: Cytochrome b6-f complex subunit 4 (160 aa).

3 helical membrane passes run 36-56, 95-115, and 131-151; these read LLYIFPVCILGTIACCIGLGV, LLGVLSMAAVPIGLITVPFIE, and LVFLFGTFTAFWLGIGATMPI.

Belongs to the cytochrome b family. PetD subfamily. In terms of assembly, the 4 large subunits of the cytochrome b6-f complex are cytochrome b6, subunit IV (17 kDa polypeptide, petD), cytochrome f and the Rieske protein, while the 4 small subunits are petG, petL, petM and petN. The complex functions as a dimer.

The protein resides in the plastid. Its subcellular location is the chloroplast thylakoid membrane. Functionally, component of the cytochrome b6-f complex, which mediates electron transfer between photosystem II (PSII) and photosystem I (PSI), cyclic electron flow around PSI, and state transitions. This Emiliania huxleyi (Coccolithophore) protein is Cytochrome b6-f complex subunit 4.